A 703-amino-acid chain; its full sequence is Polyribonucleotide nucleotidyltransferase (703 aa).

Mg(2+) is bound by residues Asp486 and Asp492. In terms of domain architecture, KH spans Pro554–Ile613. The S1 motif domain occupies Gly623–Lys691.

It belongs to the polyribonucleotide nucleotidyltransferase family. Requires Mg(2+) as cofactor.

The protein localises to the cytoplasm. The enzyme catalyses RNA(n+1) + phosphate = RNA(n) + a ribonucleoside 5'-diphosphate. Its function is as follows. Involved in mRNA degradation. Catalyzes the phosphorolysis of single-stranded polyribonucleotides processively in the 3'- to 5'-direction. This is Polyribonucleotide nucleotidyltransferase from Ruminiclostridium cellulolyticum (strain ATCC 35319 / DSM 5812 / JCM 6584 / H10) (Clostridium cellulolyticum).